Here is a 126-residue protein sequence, read N- to C-terminus: NADH-quinone oxidoreductase subunit A (126 aa).

A run of 3 helical transmembrane segments spans residues 11-31, 64-84, and 98-118; these read IAIQ…SSWL, FLVA…YPWA, and EGFV…IYVI.

This sequence belongs to the complex I subunit 3 family. NDH-1 is composed of 14 different subunits. Subunits NuoA, H, J, K, L, M, N constitute the membrane sector of the complex.

It is found in the cell inner membrane. It carries out the reaction a quinone + NADH + 5 H(+)(in) = a quinol + NAD(+) + 4 H(+)(out). NDH-1 shuttles electrons from NADH, via FMN and iron-sulfur (Fe-S) centers, to quinones in the respiratory chain. The immediate electron acceptor for the enzyme in this species is believed to be a menaquinone. Couples the redox reaction to proton translocation (for every two electrons transferred, four hydrogen ions are translocated across the cytoplasmic membrane), and thus conserves the redox energy in a proton gradient. This Cytophaga hutchinsonii (strain ATCC 33406 / DSM 1761 / CIP 103989 / NBRC 15051 / NCIMB 9469 / D465) protein is NADH-quinone oxidoreductase subunit A.